A 210-amino-acid chain; its full sequence is Glutathione S-transferase P 2 (210 aa).

Positions 2–81 (PPYTIVYFPS…HLGRSLGLYG (80 aa)) constitute a GST N-terminal domain. Glutathione is bound by residues Y8, R14, W39, K45, 52 to 53 (QL), and 65 to 66 (QS). The GST C-terminal domain maps to 83-204 (NQREAAQVDM…SSPEHVNRPI (122 aa)).

The protein belongs to the GST superfamily. Pi family. In terms of assembly, homodimer. In terms of tissue distribution, selectively expressed in gall bladder, colon, heart, and skeletal muscle.

It carries out the reaction RX + glutathione = an S-substituted glutathione + a halide anion + H(+). Functionally, conjugation of reduced glutathione to a wide number of exogenous and endogenous hydrophobic electrophiles. Cannot metabolize 1-chloro-2,4-dinitrobenzene. In Mus musculus (Mouse), this protein is Glutathione S-transferase P 2 (Gstp2).